A 230-amino-acid polypeptide reads, in one-letter code: ATP-dependent dethiobiotin synthetase BioD (230 aa).

12 to 17 (DVGKTV) is an ATP binding site. Mg(2+) is bound at residue threonine 16. Lysine 37 is an active-site residue. Threonine 41 contacts substrate. ATP is bound by residues aspartate 49, 108-111 (EGAG), 168-169 (GS), and 198-200 (PEG). Mg(2+) is bound by residues aspartate 49 and glutamate 108.

This sequence belongs to the dethiobiotin synthetase family. As to quaternary structure, homodimer. The cofactor is Mg(2+).

The protein localises to the cytoplasm. The enzyme catalyses (7R,8S)-7,8-diammoniononanoate + CO2 + ATP = (4R,5S)-dethiobiotin + ADP + phosphate + 3 H(+). The protein operates within cofactor biosynthesis; biotin biosynthesis; biotin from 7,8-diaminononanoate: step 1/2. Catalyzes a mechanistically unusual reaction, the ATP-dependent insertion of CO2 between the N7 and N8 nitrogen atoms of 7,8-diaminopelargonic acid (DAPA, also called 7,8-diammoniononanoate) to form a ureido ring. The chain is ATP-dependent dethiobiotin synthetase BioD from Corynebacterium kroppenstedtii (strain DSM 44385 / JCM 11950 / CIP 105744 / CCUG 35717).